We begin with the raw amino-acid sequence, 119 residues long: MSSRPGVDQRFLDAYRLRKTDEYSSVFAFRRAFKGRFFIAHYRPNELGTARLGVVIAKKLAKRANVRNLLKRIVREQFRKARPALAHHDLVVRLHVPVKMATRAMINDDVVNLLGRFRE.

It belongs to the RnpA family. As to quaternary structure, consists of a catalytic RNA component (M1 or rnpB) and a protein subunit.

The enzyme catalyses Endonucleolytic cleavage of RNA, removing 5'-extranucleotides from tRNA precursor.. Functionally, RNaseP catalyzes the removal of the 5'-leader sequence from pre-tRNA to produce the mature 5'-terminus. It can also cleave other RNA substrates such as 4.5S RNA. The protein component plays an auxiliary but essential role in vivo by binding to the 5'-leader sequence and broadening the substrate specificity of the ribozyme. This Aromatoleum aromaticum (strain DSM 19018 / LMG 30748 / EbN1) (Azoarcus sp. (strain EbN1)) protein is Ribonuclease P protein component.